The sequence spans 58 residues: Large ribosomal subunit protein bL32 (58 aa).

Positions 1-19 (MAVPKRKTSKSNTKMRRAA) are enriched in basic residues. A disordered region spans residues 1 to 22 (MAVPKRKTSKSNTKMRRAANSK).

This sequence belongs to the bacterial ribosomal protein bL32 family.

The polypeptide is Large ribosomal subunit protein bL32 (Clostridioides difficile (strain 630) (Peptoclostridium difficile)).